The chain runs to 142 residues: Glia maturation factor beta (142 aa).

Residue Ser2 is modified to N-acetylserine. In terms of domain architecture, ADF-H spans 4-139 (SLVVCDVAED…TEEWLREKLG (136 aa)).

The protein belongs to the actin-binding proteins ADF family. GMF subfamily. Post-translationally, phosphorylated; stimulated by phorbol ester.

Functionally, this protein causes differentiation of brain cells, stimulation of neural regeneration, and inhibition of proliferation of tumor cells. This chain is Glia maturation factor beta (Gmfb), found in Mus musculus (Mouse).